Reading from the N-terminus, the 640-residue chain is Chaperone protein dnaK2 (640 aa).

The residue at position 197 (Thr-197) is a Phosphothreonine; by autocatalysis. The segment at 605–640 is disordered; it reads VYQSAQSSDGTGSSSSGGSGSGGDDEVIDAEFSETK. Residues 627 to 640 are compositionally biased toward acidic residues; it reads GDDEVIDAEFSETK.

The protein belongs to the heat shock protein 70 family.

Functionally, acts as a chaperone. The protein is Chaperone protein dnaK2 (dnaK2) of Thermosynechococcus vestitus (strain NIES-2133 / IAM M-273 / BP-1).